Consider the following 364-residue polypeptide: U6 snRNA phosphodiesterase 1 (364 aa).

Positions 1 to 120 are disordered; sequence MKRPLVDYDS…RQRQVPHIPG (120 aa). The span at 9 to 29 shows a compositional bias: low complexity; the sequence is DSGSGSESECGSSSDGPKSSS. His182 acts as the Proton acceptor in catalysis. AMP-binding positions include 182 to 184, Tyr279, and 281 to 291; these read HIS and SQDMGYRFHVT. UMP contacts are provided by residues Tyr279 and 287-291; that span reads RFHVT. His289 acts as the Proton donor in catalysis.

The protein belongs to the 2H phosphoesterase superfamily. USB1 family.

It localises to the nucleus. In terms of biological role, 3'-5' RNA exonuclease that trims the 3' end of oligo(U) tracts of the pre-U6 small nuclear RNA (snRNA) molecule, leading to the formation of a U6 snRNA 3' end-terminated with a 2',3'-cyclic phosphate. Participates in the U6 snRNA 3' end processing that prevents U6 snRNA degradation. This is U6 snRNA phosphodiesterase 1 (usb1) from Neurospora crassa (strain ATCC 24698 / 74-OR23-1A / CBS 708.71 / DSM 1257 / FGSC 987).